The chain runs to 157 residues: Small ribosomal subunit protein uS7 (157 aa).

Belongs to the universal ribosomal protein uS7 family. In terms of assembly, part of the 30S ribosomal subunit. Contacts proteins S9 and S11.

One of the primary rRNA binding proteins, it binds directly to 16S rRNA where it nucleates assembly of the head domain of the 30S subunit. Is located at the subunit interface close to the decoding center, probably blocks exit of the E-site tRNA. This is Small ribosomal subunit protein uS7 from Chlamydia caviae (strain ATCC VR-813 / DSM 19441 / 03DC25 / GPIC) (Chlamydophila caviae).